Consider the following 149-residue polypeptide: UPF0756 membrane protein Nther_1957 (149 aa).

4 helical membrane-spanning segments follow: residues 5 to 25 (IVVL…LVAT), 52 to 72 (LGIL…DIMP), 85 to 105 (LIAV…VELL), and 111 to 131 (VMVG…GVPA).

The protein belongs to the UPF0756 family.

The protein resides in the cell membrane. The chain is UPF0756 membrane protein Nther_1957 from Natranaerobius thermophilus (strain ATCC BAA-1301 / DSM 18059 / JW/NM-WN-LF).